Consider the following 428-residue polypeptide: Histidinol dehydrogenase (428 aa).

Residues serine 234, glutamine 256, and histidine 259 each contribute to the substrate site. The Zn(2+) site is built by glutamine 256 and histidine 259. Active-site proton acceptor residues include glutamate 324 and histidine 325. Substrate is bound by residues histidine 325, aspartate 358, glutamate 412, and histidine 417. Aspartate 358 is a binding site for Zn(2+). Histidine 417 provides a ligand contact to Zn(2+).

Belongs to the histidinol dehydrogenase family. Zn(2+) is required as a cofactor.

It catalyses the reaction L-histidinol + 2 NAD(+) + H2O = L-histidine + 2 NADH + 3 H(+). Its pathway is amino-acid biosynthesis; L-histidine biosynthesis; L-histidine from 5-phospho-alpha-D-ribose 1-diphosphate: step 9/9. Its function is as follows. Catalyzes the sequential NAD-dependent oxidations of L-histidinol to L-histidinaldehyde and then to L-histidine. This is Histidinol dehydrogenase from Pelagibacter ubique (strain HTCC1062).